Reading from the N-terminus, the 567-residue chain is Laccase-7 (567 aa).

A signal peptide spans 1–23 (MEGVRVPIACALILLAISSITSA). Plastocyanin-like domains are found at residues 31-147 (NVQN…PKSG) and 157-310 (KEVP…YGGA). N-linked (GlcNAc...) asparagine glycosylation is found at asparagine 34, asparagine 50, and asparagine 77. Positions 81 and 83 each coordinate Cu cation. Residue asparagine 115 is glycosylated (N-linked (GlcNAc...) asparagine). 2 residues coordinate Cu cation: histidine 126 and histidine 128. Asparagine 186, asparagine 298, asparagine 339, asparagine 374, asparagine 386, asparagine 427, and asparagine 450 each carry an N-linked (GlcNAc...) asparagine glycan. In terms of domain architecture, Plastocyanin-like 3 spans 412-551 (DFPDQPPVKF…GMIFVVKNGP (140 aa)). Histidine 468, histidine 471, histidine 473, histidine 530, cysteine 531, histidine 532, and histidine 536 together coordinate Cu cation.

Belongs to the multicopper oxidase family. The cofactor is Cu cation. As to expression, predominantly expressed in tissues other than the inflorescence stem.

Its subcellular location is the secreted. The protein localises to the extracellular space. It localises to the apoplast. It carries out the reaction 4 hydroquinone + O2 = 4 benzosemiquinone + 2 H2O. Its function is as follows. Lignin degradation and detoxification of lignin-derived products. The protein is Laccase-7 (LAC7) of Arabidopsis thaliana (Mouse-ear cress).